A 218-amino-acid polypeptide reads, in one-letter code: Small ribosomal subunit protein uS3c (218 aa).

The region spanning 47 to 118 is the KH type-2 domain; the sequence is IQKTIKISSG…KLNIAITRIA (72 aa).

It belongs to the universal ribosomal protein uS3 family. In terms of assembly, part of the 30S ribosomal subunit.

Its subcellular location is the plastid. It localises to the chloroplast. This is Small ribosomal subunit protein uS3c (rps3) from Lotus japonicus (Lotus corniculatus var. japonicus).